Consider the following 415-residue polypeptide: Vascular endothelial growth factor C (415 aa).

Positions 1–31 (MHLLCFLSLACSLLAAALIPSPREAPATVAA) are cleaved as a signal peptide. The propeptide occupies 32 to 107 (FESGLGFSEA…RTGDSVKFAA (76 aa)). 3 disulfide bridges follow: C127/C169, C158/C205, and C162/C207. N171, N201, and N236 each carry an N-linked (GlcNAc...) asparagine glycan. Positions 224–415 (SLPATLPQCQ…PSYWKRPHLN (192 aa)) are excised as a propeptide. 4 repeat units span residues 276–291 (CGPN…QCVC), 300–315 (CGPH…QCVC), 324–339 (CGAN…QCVC), and 343–358 (CPRN…ACEC). The tract at residues 276 to 358 (CGPNKELDED…LNPGKCACEC (83 aa)) is 4 X 16 AA repeats of C-X(10)-C-X-C-X(1,3)-C.

Belongs to the PDGF/VEGF growth factor family. As to quaternary structure, homodimer; non-covalent and antiparallel. Interacts with FLT4/VEGFR3; the interaction is required for FLT4/VEGFR3 homodimarization and activation. In terms of processing, undergoes a complex proteolytic maturation which generates a variety of processed secreted forms with increased activity toward VEGFR-3, but only the fully processed form could activate VEGFR-2. VEGF-C first form an antiparallel homodimer linked by disulfide bonds. Before secretion, a cleavage occurs between Arg-223 and Ser-224 producing a heterotetramer. The next extracellular step of the processing removes the N-terminal propeptide. Finally the mature VEGF-C is composed mostly of two VEGF homology domains (VHDs) bound by non-covalent interactions. Expressed in adult heart, brain, spleen, lung, liver, skeletal muscle, kidney, testis and intestine with higher levels in heart, brain and kidney. Isoform 4 levels are very low. Isoform 3 is mostly expressed in liver and has reduced expression level in other tissues. Isoform 2 is mostly expressed in brain and kidney, although a lower level expression in other tissues is also detectable.

It localises to the secreted. Functionally, growth factor active in angiogenesis, and endothelial cell growth, stimulating their proliferation and migration and also has effects on the permeability of blood vessels. May function in angiogenesis of the venous and lymphatic vascular systems during embryogenesis, and also in the maintenance of differentiated lymphatic endothelium in adults. Binds and activates KDR/VEGFR2 and FLT4/VEGFR3 receptors. The chain is Vascular endothelial growth factor C (Vegfc) from Mus musculus (Mouse).